A 403-amino-acid chain; its full sequence is Phosphopentomutase (403 aa).

Mn(2+) is bound by residues Asp-13, Asp-298, His-303, Asp-339, His-340, and His-351.

This sequence belongs to the phosphopentomutase family. The cofactor is Mn(2+).

The protein localises to the cytoplasm. It carries out the reaction 2-deoxy-alpha-D-ribose 1-phosphate = 2-deoxy-D-ribose 5-phosphate. It catalyses the reaction alpha-D-ribose 1-phosphate = D-ribose 5-phosphate. Its pathway is carbohydrate degradation; 2-deoxy-D-ribose 1-phosphate degradation; D-glyceraldehyde 3-phosphate and acetaldehyde from 2-deoxy-alpha-D-ribose 1-phosphate: step 1/2. In terms of biological role, isomerase that catalyzes the conversion of deoxy-ribose 1-phosphate (dRib-1-P) and ribose 1-phosphate (Rib-1-P) to deoxy-ribose 5-phosphate (dRib-5-P) and ribose 5-phosphate (Rib-5-P), respectively. The polypeptide is Phosphopentomutase (Streptococcus pneumoniae (strain JJA)).